Here is a 132-residue protein sequence, read N- to C-terminus: ATP synthase epsilon chain (132 aa).

The protein belongs to the ATPase epsilon chain family. F-type ATPases have 2 components, CF(1) - the catalytic core - and CF(0) - the membrane proton channel. CF(1) has five subunits: alpha(3), beta(3), gamma(1), delta(1), epsilon(1). CF(0) has three main subunits: a, b and c.

The protein localises to the cell inner membrane. Its function is as follows. Produces ATP from ADP in the presence of a proton gradient across the membrane. The chain is ATP synthase epsilon chain from Anaeromyxobacter dehalogenans (strain 2CP-1 / ATCC BAA-258).